A 160-amino-acid chain; its full sequence is Surface-adhesin protein E (160 aa).

The N-terminal stretch at 1–15 (MKKIILTLSLGLLTA) is a signal peptide. A lipid anchor (N-palmitoyl cysteine) is attached at cysteine 16. Cysteine 16 carries S-diacylglycerol cysteine lipidation.

It localises to the cell outer membrane. The protein localises to the cell surface. In terms of biological role, acts as a multifunctional adhesin involved in direct interactions with host epithelial cells and host proteins. The chain is Surface-adhesin protein E (pe) from Haemophilus influenzae (strain ATCC 51907 / DSM 11121 / KW20 / Rd).